Consider the following 449-residue polypeptide: Elongation factor 1-alpha C (449 aa).

In terms of domain architecture, tr-type G spans 5 to 234 (KQHVSIVVIG…DACDPPKRPV (230 aa)). The G1 stretch occupies residues 14–21 (GHVDSGKS). A GTP-binding site is contributed by 14–21 (GHVDSGKS). Residue Lys-55 is modified to N6,N6-dimethyllysine. Positions 70–74 (GITID) are G2. An N6,N6,N6-trimethyllysine modification is found at Lys-79. Positions 91-94 (DAPG) are G3. GTP is bound by residues 91–95 (DAPGH) and 153–156 (NKMD). The interval 153–156 (NKMD) is G4. Residue Lys-187 is modified to N6,N6,N6-trimethyllysine. Residues 194 to 196 (SGW) form a G5 region. Position 265 is an N6-methyllysine (Lys-265). An N6,N6,N6-trimethyllysine mark is found at Lys-310 and Lys-400.

This sequence belongs to the TRAFAC class translation factor GTPase superfamily. Classic translation factor GTPase family. EF-Tu/EF-1A subfamily.

Its subcellular location is the cytoplasm. This protein promotes the GTP-dependent binding of aminoacyl-tRNA to the A-site of ribosomes during protein biosynthesis. The chain is Elongation factor 1-alpha C (TEF-C) from Porphyra purpurea (Red seaweed).